Here is a 66-residue protein sequence, read N- to C-terminus: Toxin BomPI (66 aa).

The LCN-type CS-alpha/beta domain maps to Arg2–His64. Disulfide bonds link Cys12-Cys63, Cys16-Cys36, Cys22-Cys46, and Cys26-Cys48.

Belongs to the long (4 C-C) scorpion toxin superfamily. Sodium channel inhibitor family. Alpha subfamily. As to expression, expressed by the venom gland.

The protein resides in the secreted. Its function is as follows. Alpha toxins bind voltage-independently at site-3 of sodium channels (Nav) and inhibit the inactivation of the activated channels, thereby blocking neuronal transmission. This is Toxin BomPI from Buthus occitanus mardochei (Moroccan scorpion).